Consider the following 447-residue polypeptide: N-succinylarginine dihydrolase (447 aa).

Residues 19 to 28, N110, and 137 to 138 each bind substrate; these read AGLSFGNEAS and HR. E174 is an active-site residue. Substrate is bound at residue R212. Residue H248 is part of the active site. The substrate site is built by D250 and N359. Residue C365 is the Nucleophile of the active site.

Belongs to the succinylarginine dihydrolase family. As to quaternary structure, homodimer.

The enzyme catalyses N(2)-succinyl-L-arginine + 2 H2O + 2 H(+) = N(2)-succinyl-L-ornithine + 2 NH4(+) + CO2. It participates in amino-acid degradation; L-arginine degradation via AST pathway; L-glutamate and succinate from L-arginine: step 2/5. In terms of biological role, catalyzes the hydrolysis of N(2)-succinylarginine into N(2)-succinylornithine, ammonia and CO(2). This is N-succinylarginine dihydrolase from Escherichia fergusonii (strain ATCC 35469 / DSM 13698 / CCUG 18766 / IAM 14443 / JCM 21226 / LMG 7866 / NBRC 102419 / NCTC 12128 / CDC 0568-73).